Consider the following 242-residue polypeptide: MADKETLLKLREDFKMQNKSVFILGASGETGKVLLKEILGQNLFSKVTLIGRRKLTFEEEAYNNVNQEVVDFEKLDEYAPAFQGHDVGFCCLGTTRRKAGADGFVRVDRDYVLKSAELAKAGGCKHFNLLSSRGADKSSSFLYLQVKGEVEAKVEELKFDRLSVFRPGVLLCDRQESRPGEWLARKFFGSLPDSWASGYAVPVVTVVRAMLNNLVSPGSGQMELLENKAILHLGKDSDGPKL.

N-acetylalanine is present on Ala-2. Positions 2-25 are required for interaction with elongation factor EEF1A1; that stretch reads ADKETLLKLREDFKMQNKSVFILG. NADPH-binding residues include Ser-27, Gly-28, Glu-29, Thr-30, Arg-52, Arg-53, Leu-92, Gly-93, Tyr-143, Lys-147, Leu-170, and Arg-178. Tyr-143 functions as the Proton acceptor in the catalytic mechanism. Residue Lys-147 is part of the active site.

Monomer. Forms homodimers during oxidative stress. Interacts (via N-terminus) with elongation factor EEF1A1 (via middle-region); the interaction is direct and competes with EEF1A1 binding to guanyl-nucleotide exchange factor EEF1B2, thereby inhibiting GDP for GTP exchange and reactivation of EEF1A1. Interacts with nuclear transport receptors XPO4, IPO5/RANBP5, IPO7, IPO9 and KPNB1 as well as GCN1L1/GCN1 and LRPPRC probably through their HEAT repeats. Binds NCOA5/CIA.

Its function is as follows. Represses translation by preventing reactivation of elongation factor eEF1A. May also inhibit nuclear import by competing with nuclear import substrates for binding to a subset of nuclear transport receptors. Has additionally been proposed to act as a redox sensor involved in cellular oxidative stress surveillance. May bind NADPH. This Rattus norvegicus (Rat) protein is Protein HTATIP2.